We begin with the raw amino-acid sequence, 228 residues long: UPF0758 protein CLB_3028 (228 aa).

An MPN domain is found at 106–228; the sequence is KISTPLDVSN…YVSMKEKGTI (123 aa). The Zn(2+) site is built by His177, His179, and Asp190. The JAMM motif signature appears at 177 to 190; the sequence is HNHPSGDPTPSKED.

This sequence belongs to the UPF0758 family.

This Clostridium botulinum (strain ATCC 19397 / Type A) protein is UPF0758 protein CLB_3028.